We begin with the raw amino-acid sequence, 457 residues long: tRNA-2-methylthio-N(6)-dimethylallyladenosine synthase (457 aa).

The MTTase N-terminal domain maps to 18–133 (KKLFIETYGC…LPELIASVEA (116 aa)). [4Fe-4S] cluster is bound by residues C27, C63, C97, C171, C175, and C178. One can recognise a Radical SAM core domain in the interval 157 to 390 (CGNHISGFVS…IALQNRLSAE (234 aa)). The TRAM domain maps to 393–456 (NRCIGKTYEV…SATLKGEEVF (64 aa)).

The protein belongs to the methylthiotransferase family. MiaB subfamily. In terms of assembly, monomer. Requires [4Fe-4S] cluster as cofactor.

Its subcellular location is the cytoplasm. It catalyses the reaction N(6)-dimethylallyladenosine(37) in tRNA + (sulfur carrier)-SH + AH2 + 2 S-adenosyl-L-methionine = 2-methylsulfanyl-N(6)-dimethylallyladenosine(37) in tRNA + (sulfur carrier)-H + 5'-deoxyadenosine + L-methionine + A + S-adenosyl-L-homocysteine + 2 H(+). Catalyzes the methylthiolation of N6-(dimethylallyl)adenosine (i(6)A), leading to the formation of 2-methylthio-N6-(dimethylallyl)adenosine (ms(2)i(6)A) at position 37 in tRNAs that read codons beginning with uridine. The sequence is that of tRNA-2-methylthio-N(6)-dimethylallyladenosine synthase from Bacteroides fragilis (strain ATCC 25285 / DSM 2151 / CCUG 4856 / JCM 11019 / LMG 10263 / NCTC 9343 / Onslow / VPI 2553 / EN-2).